A 144-amino-acid polypeptide reads, in one-letter code: Putative pre-16S rRNA nuclease (144 aa).

Belongs to the YqgF nuclease family.

It is found in the cytoplasm. Functionally, could be a nuclease involved in processing of the 5'-end of pre-16S rRNA. This is Putative pre-16S rRNA nuclease from Oleidesulfovibrio alaskensis (strain ATCC BAA-1058 / DSM 17464 / G20) (Desulfovibrio alaskensis).